A 258-amino-acid chain; its full sequence is Imidazole glycerol phosphate synthase subunit HisF (258 aa).

Active-site residues include aspartate 11 and aspartate 130.

The protein belongs to the HisA/HisF family. In terms of assembly, heterodimer of HisH and HisF.

Its subcellular location is the cytoplasm. The catalysed reaction is 5-[(5-phospho-1-deoxy-D-ribulos-1-ylimino)methylamino]-1-(5-phospho-beta-D-ribosyl)imidazole-4-carboxamide + L-glutamine = D-erythro-1-(imidazol-4-yl)glycerol 3-phosphate + 5-amino-1-(5-phospho-beta-D-ribosyl)imidazole-4-carboxamide + L-glutamate + H(+). It participates in amino-acid biosynthesis; L-histidine biosynthesis; L-histidine from 5-phospho-alpha-D-ribose 1-diphosphate: step 5/9. In terms of biological role, IGPS catalyzes the conversion of PRFAR and glutamine to IGP, AICAR and glutamate. The HisF subunit catalyzes the cyclization activity that produces IGP and AICAR from PRFAR using the ammonia provided by the HisH subunit. This chain is Imidazole glycerol phosphate synthase subunit HisF, found in Methylobacterium sp. (strain 4-46).